A 188-amino-acid polypeptide reads, in one-letter code: Methylamine dehydrogenase light chain (188 aa).

A signal peptide (tat-type signal) is located at residues 1–57; sequence MLGNFRFDDMVEKLSRRVAGQTSRRSVIGKLGTAMLGIGLVPLLPVDRRGRVSRANA. 6 disulfide bridges follow: cysteine 80–cysteine 145, cysteine 86–cysteine 118, cysteine 93–cysteine 178, cysteine 95–cysteine 143, cysteine 103–cysteine 134, and cysteine 135–cysteine 166. Position 114 is a tryptophylquinone (tryptophan 114). Residues 114-165 constitute a cross-link (tryptophan tryptophylquinone (Trp-Trp)); it reads WVASCYNPTDGQSYLIAYRDCCGYNVSGRCPCLNTEGELPVYRPEFANDIIW.

It belongs to the aromatic amine dehydrogenase light chain family. As to quaternary structure, heterotetramer of two light and two heavy chains. It depends on tryptophan tryptophylquinone residue as a cofactor. Post-translationally, predicted to be exported by the Tat system. The position of the signal peptide cleavage has not been experimentally proven. Tryptophan tryptophylquinone (TTQ) is formed by oxidation of the indole ring of a tryptophan to form tryptophylquinone followed by covalent cross-linking with another tryptophan residue.

It is found in the periplasm. The enzyme catalyses 2 oxidized [amicyanin] + methylamine + H2O = 2 reduced [amicyanin] + formaldehyde + NH4(+) + 2 H(+). Its pathway is one-carbon metabolism; methylamine degradation; formaldehyde from methylamine: step 1/1. In terms of biological role, methylamine dehydrogenase carries out the oxidation of methylamine. Electrons are passed from methylamine dehydrogenase to amicyanin. The chain is Methylamine dehydrogenase light chain (mauA) from Paracoccus denitrificans.